The primary structure comprises 292 residues: Elongation factor Ts (292 aa).

The involved in Mg(2+) ion dislocation from EF-Tu stretch occupies residues 80-83 (TDFV).

Belongs to the EF-Ts family.

It localises to the cytoplasm. Its function is as follows. Associates with the EF-Tu.GDP complex and induces the exchange of GDP to GTP. It remains bound to the aminoacyl-tRNA.EF-Tu.GTP complex up to the GTP hydrolysis stage on the ribosome. The chain is Elongation factor Ts from Cupriavidus pinatubonensis (strain JMP 134 / LMG 1197) (Cupriavidus necator (strain JMP 134)).